A 477-amino-acid chain; its full sequence is Cysteine--tRNA ligase (477 aa).

C30 contacts Zn(2+). The short motif at 32-42 is the 'HIGH' region element; the sequence is PTVYDYNHIGH. The Zn(2+) site is built by C209, H234, and E238. The short motif at 267–271 is the 'KMSKS' region element; the sequence is KMSKS. K270 provides a ligand contact to ATP.

It belongs to the class-I aminoacyl-tRNA synthetase family. Zn(2+) serves as cofactor.

Its subcellular location is the cytoplasm. The catalysed reaction is tRNA(Cys) + L-cysteine + ATP = L-cysteinyl-tRNA(Cys) + AMP + diphosphate. The chain is Cysteine--tRNA ligase from Staphylothermus marinus (strain ATCC 43588 / DSM 3639 / JCM 9404 / F1).